The sequence spans 178 residues: Bryoporin (178 aa).

Phosphocholine contacts are provided by Ser51, Val83, Ser102, Pro104, and Tyr134. Positions Trp101–Ala117 are trp-rich region.

The protein belongs to the actinoporin family. Plant subfamily.

Its activity is regulated as follows. Inhibited by sphingomyelin. In terms of biological role, actinoporin-related protein having hemolytic activity in vitro. Binds probably a phosphocholine derivative with the unique amido or hydroxyl groups found in sphingomyelin. Involved in drought tolerance. This Physcomitrium patens (Spreading-leaved earth moss) protein is Bryoporin.